The sequence spans 217 residues: NADPH-dependent 3-demethoxyubiquinone 3-hydroxylase, mitochondrial (217 aa).

Residues Met-1 to Arg-35 constitute a mitochondrion transit peptide. The required for nuclear localization stretch occupies residues Arg-11–Arg-29. 2 tandem repeats follow at residues Ala-48–Leu-129 and Gly-130–Leu-217. A 2 X approximate tandem repeats region spans residues Ala-48–Leu-217. Arg-51 lines the NADH pocket. Glu-60, Glu-90, His-93, Glu-142, Glu-178, and His-181 together coordinate Fe cation. NADH is bound by residues Tyr-212 and Arg-216.

Belongs to the COQ7 family. Component of a multi-subunit COQ enzyme complex. Interacts with COQ8B and COQ6. Interacts with COQ9. It depends on Fe cation as a cofactor. Expressed dominantly in heart and skeletal muscle.

The protein resides in the mitochondrion inner membrane. Its subcellular location is the mitochondrion. It is found in the nucleus. It localises to the chromosome. It carries out the reaction a 5-methoxy-2-methyl-3-(all-trans-polyprenyl)benzoquinone + NADH + O2 = a 3-demethylubiquinone + NAD(+) + H2O. The protein operates within cofactor biosynthesis; ubiquinone biosynthesis. Functionally, catalyzes the hydroxylation of the 5-methoxy-2-methyl-3-(all-trans-polyprenyl)benzoquinone at the C6 position and participates in the biosynthesis of ubiquinone. Catalyzes the reaction through a substrate-mediated reduction pathway, whereby NADH shuttles electrons to 5-methoxy-2-methyl-3-(all-trans-decaprenyl)benzoquinone, which then transfers the electrons to the two Fe(3+) centers. The binding of 5-methoxy-2-methyl-3-(all-trans-polyprenyl)benzoquinone (DMQn) mediates reduction of the diiron center by nicotinamide adenine dinucleotide (NADH) and initiates oxygen activation for subsequent DMQ hydroxylation. The physiological substrates are 5-methoxy-2-methyl-3-(all-trans-nonaprenyl)benzoquinone (DMQ(9)) and 5-methoxy-2-methyl-3-(all-trans-decaprenyl)benzoquinone (DMQ(10)), however in vitro the enzyme does not have any specificity concerning the length of the polyprenyl tail, and accepts tails of various lengths with similar efficiency. Also has a structural role in the COQ enzyme complex, stabilizing other COQ polypeptides. Involved in lifespan determination in a ubiquinone-independent manner. Plays a role in modulating mitochondrial stress responses, acting in the nucleus, perhaps via regulating gene expression, independent of its characterized mitochondrial function in ubiquinone biosynthesis. The chain is NADPH-dependent 3-demethoxyubiquinone 3-hydroxylase, mitochondrial from Homo sapiens (Human).